The primary structure comprises 88 residues: Small ribosomal subunit protein bS16 (88 aa).

It belongs to the bacterial ribosomal protein bS16 family.

In Leptospira interrogans serogroup Icterohaemorrhagiae serovar Lai (strain 56601), this protein is Small ribosomal subunit protein bS16.